A 1196-amino-acid chain; its full sequence is MDRSEIVARENPVITQRVTNLLRTNAPLLFMPIDIHEVRYGAYMLFMYGSLENGYKAEVRIENIPVFFDVQIESDNTNQLFLKSLLAAENITYERLETLTQRPVMGYREKEKEFAPYIRIFFKSLYERRKAITYLNNMGYNTAADDTTCYYRMVSRELKLPLTSWIQLQHYSYEPRGLVHRFSVTPEDLVSYQDDGPTDHSIVMAYDIETYSPVKGTVPDPNQANDVVFMICMRIFWIHSTEPLASTCITMAPCKKSPEWTTIVCSSEKNLLLSFAEQFSRWAPDICTGFNDSRYDWPFIVEKSMQHDILEEVFNKMSLFWPQKLDTILKCYYVKEKRVKISAEKSIISSFLHTPGCLPMDVRNMCMQLYPKAEKTSLKAFLENCGLDSKVDLPYHLMWKYYETRDSEKMADVAYYCIIDAQRCQDLLVRHNVIPDRREVGILSYTSLYDCIYYAGGHKVCNMLIAYAIHDEYGRIACSTIARGKREHGKYPGAFVIDPVKGLEQDKPTTGLDFASLYPSLIMAYNFSPEKFVASRDEANSLMAKGESLHYVSFHFNNRLVEGWFVRHNNVPDKMGLYPKVLIDLLNKRTALKQELKKLGEKKECIHESHPGFKELQFRHAMVDAKQKALKIFMNTFYGEAGNNLSPFFLLPLAGGVTSSGQYNLKLVYNFVINKGYGIKYGDTDSLYITCPDSLYTEVTDAYLNSQKTIKHYEQLCHEKVLLSMKAMSTLCAEVNEYLRQDNGTSYLRMAYEEVLFPVCFTGKKKYYGIAHVNTPNFNTKELFIRGIDIIKQGQTKLTKTIGTRIMEESMKLRRPEDHRPPLIEIVKTVLKDAVVNMKQWNFEDFIQTDAWRPDKDNKAVQIFMSRMHARREQLKKHGAAATSQFAEPEPGERFSYVIVEKQVQFDIQGHRTDTTRKGDKMEYVSEAKAKNLPIDILFYINNYVLGLCARFINENEEFQPPGNVSNKDEYAQRRAKSYLQKFVQSIHPKDKSVIKQGIVHRQCYKYVHQEIKKKIGIFADLYKEFFNNTTNPIESFIQSTQFMIHYFDEEQKVNHSMKKMVEQHAALAGNPAGNALMRAIFTQLIVEEKKIVQALYNKGDEIHDLLTYIINNINYKIATFQTKQMLTFELSSTHVELLLKLNKTWLILVGIHVAKKHLHVLLGLSNNEPPSKTFIQQAIEEECGSIKPSCYDFIS.

Belongs to the DNA polymerase type-B family.

It catalyses the reaction DNA(n) + a 2'-deoxyribonucleoside 5'-triphosphate = DNA(n+1) + diphosphate. DNA-directed DNA polymerase involved in viral DNA replication. This is DNA polymerase beta from African swine fever virus (isolate Pig/Kenya/KEN-50/1950) (ASFV).